The chain runs to 439 residues: Protein disulfide-isomerase A6 (439 aa).

Residues 1–19 (MARLGFGLVSCTFFLAASG) form the signal peptide. 2 Thioredoxin domains span residues 20-133 (LYSS…ALRQ) and 151-287 (QGRG…EDVA). Active-site nucleophile residues include cysteine 55 and cysteine 58. Cysteine 55 and cysteine 58 are disulfide-bonded. Residues serine 129, serine 156, and serine 158 each carry the phosphoserine modification. A disordered region spans residues 141-160 (GRSGGYSSGKQGRGDSSSKK). Active-site nucleophile residues include cysteine 190 and cysteine 193. Cysteine 190 and cysteine 193 are disulfide-bonded. Residues 400-425 (GSFPAITAREPWDGRDGELPVEDDID) form a disordered region. Phosphoserine is present on serine 427. Residues 436-439 (KDEL) carry the Prevents secretion from ER motif.

This sequence belongs to the protein disulfide isomerase family. In terms of assembly, part of a large chaperone multiprotein complex comprising DNAJB11, HSP90B1, HSPA5, HYOU, PDIA2, PDIA4, PDIA6, PPIB, SDF2L1, UGGT1 and very small amounts of ERP29, but not, or at very low levels, CALR nor CANX. Interacts with MICA on the surface of tumor cells, leading to MICA disulfide bond reduction which is required for its release from tumor cells. Interacts with ITGB3 following platelet stimulation. Interacts with ERN1; the interaction is direct. Interacts with EIF2AK3. As to expression, expressed most abundantly in lung and kidney, followed by heart, liver and brain.

The protein resides in the endoplasmic reticulum lumen. The protein localises to the cell membrane. It is found in the melanosome. It catalyses the reaction Catalyzes the rearrangement of -S-S- bonds in proteins.. Its function is as follows. May function as a chaperone that inhibits aggregation of misfolded proteins. Negatively regulates the unfolded protein response (UPR) through binding to UPR sensors such as ERN1, which in turn inactivates ERN1 signaling. May also regulate the UPR via the EIF2AK3 UPR sensor. Plays a role in platelet aggregation and activation by agonists such as convulxin, collagen and thrombin. In Mesocricetus auratus (Golden hamster), this protein is Protein disulfide-isomerase A6 (PDIA6).